The following is a 234-amino-acid chain: Large ribosomal subunit protein uL1 (234 aa).

Belongs to the universal ribosomal protein uL1 family. In terms of assembly, part of the 50S ribosomal subunit.

Its function is as follows. Binds directly to 23S rRNA. The L1 stalk is quite mobile in the ribosome, and is involved in E site tRNA release. Functionally, protein L1 is also a translational repressor protein, it controls the translation of the L11 operon by binding to its mRNA. This chain is Large ribosomal subunit protein uL1, found in Pseudoalteromonas translucida (strain TAC 125).